The primary structure comprises 397 residues: Succinate--CoA ligase [ADP-forming] subunit beta (397 aa).

One can recognise an ATP-grasp domain in the interval 9–254 (KALLRSYGAP…ETEEDPKELA (246 aa)). ATP-binding positions include K46, 53–55 (GRG), E109, S112, and E117. Mg(2+) contacts are provided by N209 and D223. Substrate is bound by residues N274 and 331–333 (GIM).

This sequence belongs to the succinate/malate CoA ligase beta subunit family. In terms of assembly, heterotetramer of two alpha and two beta subunits. Mg(2+) is required as a cofactor.

The catalysed reaction is succinate + ATP + CoA = succinyl-CoA + ADP + phosphate. It catalyses the reaction GTP + succinate + CoA = succinyl-CoA + GDP + phosphate. The protein operates within carbohydrate metabolism; tricarboxylic acid cycle; succinate from succinyl-CoA (ligase route): step 1/1. Succinyl-CoA synthetase functions in the citric acid cycle (TCA), coupling the hydrolysis of succinyl-CoA to the synthesis of either ATP or GTP and thus represents the only step of substrate-level phosphorylation in the TCA. The beta subunit provides nucleotide specificity of the enzyme and binds the substrate succinate, while the binding sites for coenzyme A and phosphate are found in the alpha subunit. The chain is Succinate--CoA ligase [ADP-forming] subunit beta from Cereibacter sphaeroides (strain ATCC 17029 / ATH 2.4.9) (Rhodobacter sphaeroides).